A 208-amino-acid polypeptide reads, in one-letter code: PITH domain-containing protein ZK353.9 (208 aa).

One can recognise a PITH domain in the interval 17-189; that stretch reads EVPGDDVYRY…RIAIATYESR (173 aa).

It belongs to the PITHD1 family.

In Caenorhabditis elegans, this protein is PITH domain-containing protein ZK353.9.